We begin with the raw amino-acid sequence, 101 residues long: Gamma-secretase subunit PEN-2 (101 aa).

The Cytoplasmic portion of the chain corresponds to 1–17 (MNLERVSNEEKLNLCRK). Positions 18–36 (YYLGGFAFLPFLWLVNIFW) form an intramembrane region, helical. At 37-57 (FFREAFLAPAYTEQSQIKGYV) the chain is on the cytoplasmic side. The chain crosses the membrane as a helical span at residues 58 to 78 (WRSAVGFLFWVIILATWITIF). The Lumenal segment spans residues 79 to 101 (QIYRPRWGALGDYLSFTIPLGTP).

The protein belongs to the PEN-2 family. The functional gamma-secretase complex is composed of at least four polypeptides: a presenilin homodimer (PSEN1 or PSEN2), nicastrin (NCSTN), APH1 (APH1A or APH1B) and PSENEN.

It localises to the endoplasmic reticulum membrane. The protein localises to the golgi apparatus. The protein resides in the golgi stack membrane. Its subcellular location is the cell membrane. It is found in the membrane. Its function is as follows. Essential subunit of the gamma-secretase complex, an endoprotease complex that catalyzes the intramembrane cleavage of integral membrane proteins such as Notch receptors and APP (amyloid-beta precursor protein). The gamma-secretase complex plays a role in Notch and Wnt signaling cascades and regulation of downstream processes via its role in processing key regulatory proteins, and by regulating cytosolic CTNNB1 levels. PSENEN modulates both endoproteolysis of presenilin and gamma-secretase activity. This chain is Gamma-secretase subunit PEN-2 (Psenen), found in Mus musculus (Mouse).